Here is a 349-residue protein sequence, read N- to C-terminus: Ribosomal RNA large subunit methyltransferase M (349 aa).

S-adenosyl-L-methionine contacts are provided by residues S183, A216 to G219, D235, D255, and D271. The active-site Proton acceptor is the K300.

It belongs to the class I-like SAM-binding methyltransferase superfamily. RNA methyltransferase RlmE family. RlmM subfamily. Monomer.

Its subcellular location is the cytoplasm. The enzyme catalyses cytidine(2498) in 23S rRNA + S-adenosyl-L-methionine = 2'-O-methylcytidine(2498) in 23S rRNA + S-adenosyl-L-homocysteine + H(+). Functionally, catalyzes the 2'-O-methylation at nucleotide C2498 in 23S rRNA. The protein is Ribosomal RNA large subunit methyltransferase M of Stutzerimonas stutzeri (strain A1501) (Pseudomonas stutzeri).